The chain runs to 1029 residues: MDRMASSMKQVSNPLPKVLSRRGVGAGMEAAERESFERTQTVSVNKAINTQEVAVKEKHARTCILGTHHEKGAQTFWSVVNRLPLSSNAMLCWKFCHVFHKLLRDGHPNVLKDSLRYKNELSDMSRMWGHLSEGYGQLCSIYLKLLRTRMEYHTKNPRFPGNLQMSDRQLDEAGESDVNNFFQLTVEMFDYLECELNLFQTVFNSLDMSRSVSVTTAGQCRLAPLIQVILDCSHLYDYTVKLLFKLHSCLPADTLQGHRDRFMEQFTKLKDLFQRSSNLQYFKRLIQIPQLPENPPNFLRASALSEHISPVVVIPAEVSSPDSEPVLEKDDLMDMDASQQTLFDNKFDDVFGSSLSSDPFNFNNQNGVNKDEKDHLIERLYREISGLTGQLDNMKIESQRAMLQLKGRVSELEAELAEQQHLGRQAMDDCEFLRTELDELKRQREDTEKAQRSLTEIERKAQANEQRYSKLKEKYSELVQNHADLLRKNAEVTKQVSVARQAQVDLEREKKELADSFARTQEQQDVLENLKHELATSRQELQVLHSNLETSAQSEAKWLTQIAELEKEQGSLATVAAQREEELSALRDQLESTQIKLAGAQESMCQQVKDQRKTLLAGIRKAAEREIQEALSQLEEPTLISCAGSTDHLLSKVSSVSSCLEQLEKNGSQYLACPEDISELLHSITLLAHLTGDTIIQGSATSLRAPPEPADSLTEACRQYGRETLAYLSSLEEEGTMENADVTALRNCLSRVKTLGEELLPRGLDIKQEELGDLVDKEMAATSAAIEAATTRIEEILSKSRAGDTGVKLEVNERILGSCTSLMQAIKVLVVASKDLQKEIVESGRGTASPKEFYAKNSRWTEGLISASKAVGWGATIMVDAADLVVQGKGKFEELMVCSREIAASTAQLVAASKVKANKGSLNLTQLQQASRGVNQATAAVVASTISGKSQIEETDSMDFSSMTLTQIKRQEMDSQVRVLELENDLQKERQKLGELRKKHYELAGVAEGWEEGTEASPSTVQEAIPDKE.

Residues 32 to 160 (ERESFERTQT…EYHTKNPRFP (129 aa)) enclose the ENTH domain. Position 338 is a phosphoserine (Ser338). A coiled-coil region spans residues 375–636 (HLIERLYREI…IQEALSQLEE (262 aa)). Residues 410–491 (SELEAELAEQ…HADLLRKNAE (82 aa)) are pDED. One can recognise an I/LWEQ domain in the interval 763–1004 (GLDIKQEELG…ELRKKHYELA (242 aa)). An important for actin binding region spans residues 859 to 916 (RWTEGLISASKAVGWGATIMVDAADLVVQGKGKFEELMVCSREIAASTAQLVAASKVK). The interval 1009–1029 (GWEEGTEASPSTVQEAIPDKE) is disordered.

Belongs to the SLA2 family. In terms of assembly, homodimer. Binds actin. Binds HTT (via N-terminus). This interaction is restricted to the brain. Binds to IFT57. In normal conditions, it poorly interacts with IFT57, HIP1 being strongly associated with HTT. However, in mutant HTT proteins with a long poly-Gln region, interaction between HTT and HIP1 is inhibited, promoting the interaction between HIP1 and IFT57. Interacts with CLTB (via N-terminus). Interacts (via coiled coil domain) with AR. Interacts with AP2A1, AP2A2, CLTC and HIP1R. Interacts with GRIA1, GRIN2A and GRIN2B. As to expression, most abundantly expressed in brain. In brain, expressed in cortical tissue, hippocampus, the molecular layer of the cerebellum and olfactory bulb. Also expressed in spinal cord and bone marrow (at protein level). Expressed in reproductive tissues.

Its subcellular location is the cytoplasm. It is found in the nucleus. It localises to the endomembrane system. The protein localises to the cytoplasmic vesicle. The protein resides in the clathrin-coated vesicle membrane. Plays a role in clathrin-mediated endocytosis and trafficking. Involved in regulating AMPA receptor trafficking in the central nervous system in an NMDA-dependent manner. Regulates presynaptic nerve terminal activity. Enhances androgen receptor (AR)-mediated transcription. May act as a proapoptotic protein that induces cell death by acting through the intrinsic apoptosis pathway. Binds 3-phosphoinositides (via ENTH domain). May act through the ENTH domain to promote cell survival by stabilizing receptor tyrosine kinases following ligand-induced endocytosis. May play a functional role in the cell filament networks. May be required for differentiation, proliferation, and/or survival of somatic and germline progenitors. This chain is Huntingtin-interacting protein 1, found in Mus musculus (Mouse).